Here is a 541-residue protein sequence, read N- to C-terminus: Chaperonin GroEL (541 aa).

ATP-binding positions include 29 to 32, 86 to 90, glycine 413, 476 to 478, and aspartate 492; these read TLGP, DGTTT, and NAA. A disordered region spans residues 521-541; the sequence is KPEDNPAPAAPAANPGMGGMM. Residues 526–535 show a composition bias toward low complexity; the sequence is PAPAAPAANP.

Belongs to the chaperonin (HSP60) family. As to quaternary structure, forms a cylinder of 14 subunits composed of two heptameric rings stacked back-to-back. Interacts with the co-chaperonin GroES.

The protein resides in the cytoplasm. It carries out the reaction ATP + H2O + a folded polypeptide = ADP + phosphate + an unfolded polypeptide.. In terms of biological role, together with its co-chaperonin GroES, plays an essential role in assisting protein folding. The GroEL-GroES system forms a nano-cage that allows encapsulation of the non-native substrate proteins and provides a physical environment optimized to promote and accelerate protein folding. The polypeptide is Chaperonin GroEL (Levilactobacillus brevis (strain ATCC 367 / BCRC 12310 / CIP 105137 / JCM 1170 / LMG 11437 / NCIMB 947 / NCTC 947) (Lactobacillus brevis)).